Here is a 453-residue protein sequence, read N- to C-terminus: NADH-quinone oxidoreductase subunit D (453 aa).

Over residues 1–21 (MKDTETRPGRHRAPEPAHPEQ) the composition is skewed to basic and acidic residues. Residues 1 to 30 (MKDTETRPGRHRAPEPAHPEQPDTTGDTVV) form a disordered region.

It belongs to the complex I 49 kDa subunit family. As to quaternary structure, NDH-1 is composed of 14 different subunits. Subunits NuoB, C, D, E, F, and G constitute the peripheral sector of the complex.

The protein localises to the cell membrane. It catalyses the reaction a quinone + NADH + 5 H(+)(in) = a quinol + NAD(+) + 4 H(+)(out). In terms of biological role, NDH-1 shuttles electrons from NADH, via FMN and iron-sulfur (Fe-S) centers, to quinones in the respiratory chain. The immediate electron acceptor for the enzyme in this species is believed to be a menaquinone. Couples the redox reaction to proton translocation (for every two electrons transferred, four hydrogen ions are translocated across the cytoplasmic membrane), and thus conserves the redox energy in a proton gradient. The protein is NADH-quinone oxidoreductase subunit D of Nocardia farcinica (strain IFM 10152).